Consider the following 401-residue polypeptide: NADH-ubiquinone oxidoreductase 49 kDa subunit (401 aa).

It belongs to the complex I 49 kDa subunit family.

It is found in the mitochondrion. The enzyme catalyses a ubiquinone + NADH + 5 H(+)(in) = a ubiquinol + NAD(+) + 4 H(+)(out). Core subunit of the mitochondrial membrane respiratory chain NADH dehydrogenase (Complex I) that is believed to belong to the minimal assembly required for catalysis. Complex I functions in the transfer of electrons from NADH to the respiratory chain. The immediate electron acceptor for the enzyme is believed to be ubiquinone. Component of the iron-sulfur (IP) fragment of the enzyme. In Acanthamoeba castellanii (Amoeba), this protein is NADH-ubiquinone oxidoreductase 49 kDa subunit (NAD7).